Consider the following 408-residue polypeptide: MNYELLTTENAPVKMWTKGVPVEADARQQLINTAKMPFIFKHIAVMPDVHLGKGSTIGSVIPTKGAIIPAAVGVDIGCGMNALRTALTAADLPENLAELRQAIETAVPHGRTTGRCKRDKGAWENPPVNVDAKWAELEAGYQWLTQKYPRFLNTNNYKHLGTLGTGNHFIEICLDESDQVWIMLHSGSRGIGNAIGTYFIDLAQKEMQETLETLPSRDLAYFMEGTEYFDDYLKAVAWAQLFASLNRDAMMENVVTALQSVMQKTVKQPQTLAMEEINCHHNYVQKELHFGEEIYVTRKGAVSARAGQYGIIPGSMGAKSFIVRGLGNEESFCSCSHGAGRVMSRTKAKKLFSVEDQIRATAHVECRKDAEVIDEIPMAYKDIDAVMAAQSDLVEVIYTLRQVVCVKG.

Positions 75, 78, 168, 185, and 281 each coordinate Mn(2+). A GMP-binding site is contributed by 167–171 (NHFIE). Residues 281–282 (HN), 313–316 (PGSM), serine 320, 337–340 (HGAG), and lysine 407 contribute to the GMP site. Histidine 337 serves as the catalytic GMP-histidine intermediate.

Belongs to the RtcB family. In terms of assembly, monomer. Mn(2+) serves as cofactor.

The catalysed reaction is a 3'-end 3'-phospho-ribonucleotide-RNA + a 5'-end dephospho-ribonucleoside-RNA + GTP = a ribonucleotidyl-ribonucleotide-RNA + GMP + diphosphate. The enzyme catalyses a 3'-end 2',3'-cyclophospho-ribonucleotide-RNA + a 5'-end dephospho-ribonucleoside-RNA + GTP + H2O = a ribonucleotidyl-ribonucleotide-RNA + GMP + diphosphate + H(+). GTP-dependent RNA ligase that is involved in RNA repair. Joins RNA with 2',3'-cyclic-phosphate or 3'-phosphate ends to RNA with 5'-hydroxy ends. GTP-dependent RNA ligase that is involved in tRNA repair. Repairs broken tRNA(Asp) and tRNA(Arg) that have been cleaved by colicin E5 or colicin D, respectively. Does not repair damaged 16S rRNA in 30S ribosomal subunits. The polypeptide is RNA-splicing ligase RtcB1 (Escherichia coli (strain ATCC 25922 / DSM 1103 / LMG 8223 / NCIMB 12210 / NCTC 12241 / WDCM 00013 / Seattle 1946)).